A 287-amino-acid chain; its full sequence is Putative sugar uptake protein M6_Spy1874 (287 aa).

Helical transmembrane passes span 4–26 (IFYALIPMFTWGSIGFVSNKIGG), 33–50 (LGMTFGALLFSLAVWLIV), 55–72 (TLQLWLFGILGGFIWSIG), 85–107 (VSVANPLSSGSQLVLGSLIGVLV), 117–134 (FVVGSLALLLLIIGFYFS), 154–171 (FRALTYSTIGYVMYAVLF), 181–200 (SVILPMAVGMVLGAITFMSF), 207–229 (YVIKNSVVGLLWGIGNIFMLLAA), 234–256 (LAIAFSFSQLGAIISIVGGILFL), and 268–285 (VVTGIICFIVGAILLGVV).

The protein belongs to the GRP transporter (TC 2.A.7.5) family.

It localises to the cell membrane. The chain is Putative sugar uptake protein M6_Spy1874 from Streptococcus pyogenes serotype M6 (strain ATCC BAA-946 / MGAS10394).